The primary structure comprises 128 residues: Sulfurtransferase TusD (128 aa).

The active-site Cysteine persulfide intermediate is C78.

Belongs to the DsrE/TusD family. Heterohexamer, formed by a dimer of trimers. The hexameric TusBCD complex contains 2 copies each of TusB, TusC and TusD. The TusBCD complex interacts with TusE.

It localises to the cytoplasm. Part of a sulfur-relay system required for 2-thiolation of 5-methylaminomethyl-2-thiouridine (mnm(5)s(2)U) at tRNA wobble positions. Accepts sulfur from TusA and transfers it in turn to TusE. This Escherichia coli O157:H7 protein is Sulfurtransferase TusD.